The chain runs to 110 residues: Parvalbumin alpha (110 aa).

S2 is modified (N-acetylserine). Residues S2 and S24 each carry the phosphoserine modification. EF-hand domains lie at 39–74 and 78–110; these read KSPE…FSPD and LSVK…VAES. Residues D52, D54, S56, F58, E60, E63, D91, D93, D95, K97, and E102 each coordinate Ca(2+).

The protein belongs to the parvalbumin family.

In terms of biological role, in muscle, parvalbumin is thought to be involved in relaxation after contraction. It binds two calcium ions. This is Parvalbumin alpha (PVALB) from Bos taurus (Bovine).